We begin with the raw amino-acid sequence, 344 residues long: UDP-N-acetylglucosamine--N-acetylmuramyl-(pentapeptide) pyrophosphoryl-undecaprenol N-acetylglucosamine transferase (344 aa).

Residues 9-11, asparagine 118, arginine 157, serine 188, and glutamine 282 contribute to the UDP-N-acetyl-alpha-D-glucosamine site; that span reads TGG.

Belongs to the glycosyltransferase 28 family. MurG subfamily.

Its subcellular location is the cell inner membrane. The enzyme catalyses di-trans,octa-cis-undecaprenyl diphospho-N-acetyl-alpha-D-muramoyl-L-alanyl-D-glutamyl-meso-2,6-diaminopimeloyl-D-alanyl-D-alanine + UDP-N-acetyl-alpha-D-glucosamine = di-trans,octa-cis-undecaprenyl diphospho-[N-acetyl-alpha-D-glucosaminyl-(1-&gt;4)]-N-acetyl-alpha-D-muramoyl-L-alanyl-D-glutamyl-meso-2,6-diaminopimeloyl-D-alanyl-D-alanine + UDP + H(+). The protein operates within cell wall biogenesis; peptidoglycan biosynthesis. In terms of biological role, cell wall formation. Catalyzes the transfer of a GlcNAc subunit on undecaprenyl-pyrophosphoryl-MurNAc-pentapeptide (lipid intermediate I) to form undecaprenyl-pyrophosphoryl-MurNAc-(pentapeptide)GlcNAc (lipid intermediate II). This Aquifex aeolicus (strain VF5) protein is UDP-N-acetylglucosamine--N-acetylmuramyl-(pentapeptide) pyrophosphoryl-undecaprenol N-acetylglucosamine transferase.